We begin with the raw amino-acid sequence, 210 residues long: Thymidylate kinase (210 aa).

10–17 (GGEGAGKS) is a binding site for ATP.

It belongs to the thymidylate kinase family.

It catalyses the reaction dTMP + ATP = dTDP + ADP. Functionally, phosphorylation of dTMP to form dTDP in both de novo and salvage pathways of dTTP synthesis. This chain is Thymidylate kinase, found in Magnetococcus marinus (strain ATCC BAA-1437 / JCM 17883 / MC-1).